A 346-amino-acid polypeptide reads, in one-letter code: 4-hydroxy-3-methylbut-2-enyl diphosphate reductase (346 aa).

Cys-19 contributes to the [4Fe-4S] cluster binding site. (2E)-4-hydroxy-3-methylbut-2-enyl diphosphate-binding residues include His-48 and His-84. Dimethylallyl diphosphate-binding residues include His-48 and His-84. His-48 and His-84 together coordinate isopentenyl diphosphate. Cys-106 provides a ligand contact to [4Fe-4S] cluster. Residue His-134 coordinates (2E)-4-hydroxy-3-methylbut-2-enyl diphosphate. Dimethylallyl diphosphate is bound at residue His-134. An isopentenyl diphosphate-binding site is contributed by His-134. Glu-136 serves as the catalytic Proton donor. A (2E)-4-hydroxy-3-methylbut-2-enyl diphosphate-binding site is contributed by Thr-175. Cys-205 lines the [4Fe-4S] cluster pocket. 4 residues coordinate (2E)-4-hydroxy-3-methylbut-2-enyl diphosphate: Ser-233, Ser-234, Asn-235, and Ser-278. Residues Ser-233, Ser-234, Asn-235, and Ser-278 each coordinate dimethylallyl diphosphate. 4 residues coordinate isopentenyl diphosphate: Ser-233, Ser-234, Asn-235, and Ser-278.

It belongs to the IspH family. The cofactor is [4Fe-4S] cluster.

The catalysed reaction is isopentenyl diphosphate + 2 oxidized [2Fe-2S]-[ferredoxin] + H2O = (2E)-4-hydroxy-3-methylbut-2-enyl diphosphate + 2 reduced [2Fe-2S]-[ferredoxin] + 2 H(+). The enzyme catalyses dimethylallyl diphosphate + 2 oxidized [2Fe-2S]-[ferredoxin] + H2O = (2E)-4-hydroxy-3-methylbut-2-enyl diphosphate + 2 reduced [2Fe-2S]-[ferredoxin] + 2 H(+). It functions in the pathway isoprenoid biosynthesis; dimethylallyl diphosphate biosynthesis; dimethylallyl diphosphate from (2E)-4-hydroxy-3-methylbutenyl diphosphate: step 1/1. The protein operates within isoprenoid biosynthesis; isopentenyl diphosphate biosynthesis via DXP pathway; isopentenyl diphosphate from 1-deoxy-D-xylulose 5-phosphate: step 6/6. Functionally, catalyzes the conversion of 1-hydroxy-2-methyl-2-(E)-butenyl 4-diphosphate (HMBPP) into a mixture of isopentenyl diphosphate (IPP) and dimethylallyl diphosphate (DMAPP). Acts in the terminal step of the DOXP/MEP pathway for isoprenoid precursor biosynthesis. This Brucella melitensis biotype 1 (strain ATCC 23456 / CCUG 17765 / NCTC 10094 / 16M) protein is 4-hydroxy-3-methylbut-2-enyl diphosphate reductase.